Here is a 277-residue protein sequence, read N- to C-terminus: Sulfur carrier protein FdhD (277 aa).

Cys-121 acts as the Cysteine persulfide intermediate in catalysis. Position 260–265 (Phe-260–Arg-265) interacts with Mo-bis(molybdopterin guanine dinucleotide).

The protein belongs to the FdhD family.

The protein resides in the cytoplasm. Required for formate dehydrogenase (FDH) activity. Acts as a sulfur carrier protein that transfers sulfur from IscS to the molybdenum cofactor prior to its insertion into FDH. This is Sulfur carrier protein FdhD from Escherichia coli O6:H1 (strain CFT073 / ATCC 700928 / UPEC).